Reading from the N-terminus, the 472-residue chain is 2-oxoisovalerate dehydrogenase subunit alpha 1, mitochondrial (472 aa).

The N-terminal 56 residues, 1-56, are a transit peptide targeting the mitochondrion; sequence MAIWFARSKTLVSSLRHNLNLSTILIKRDYSHRPIFYTTSQLSSTAYLSPFGSLRH. 185-187 lines the thiamine diphosphate pocket; the sequence is QYR. Residues Ser234, Thr239, and Gln240 each coordinate K(+).

The protein belongs to the BCKDHA family. In terms of assembly, heterotetramer of alpha and beta chains. The cofactor is thiamine diphosphate.

It localises to the mitochondrion matrix. The enzyme catalyses N(6)-[(R)-lipoyl]-L-lysyl-[protein] + 3-methyl-2-oxobutanoate + H(+) = N(6)-[(R)-S(8)-2-methylpropanoyldihydrolipoyl]-L-lysyl-[protein] + CO2. In terms of biological role, the branched-chain alpha-keto dehydrogenase complex catalyzes the overall conversion of alpha-keto acids to acyl-CoA and CO(2). It contains multiple copies of three enzymatic components: branched-chain alpha-keto acid decarboxylase (E1), lipoamide acyltransferase (E2) and lipoamide dehydrogenase (E3). Required during sugar starvation. The polypeptide is 2-oxoisovalerate dehydrogenase subunit alpha 1, mitochondrial (Arabidopsis thaliana (Mouse-ear cress)).